The primary structure comprises 479 residues: Anaerobic nitric oxide reductase flavorubredoxin (479 aa).

Residues 30–210 are zinc metallo-hydrolase; the sequence is LRGSSYNSYL…PFSRLVTPKI (181 aa). Fe cation contacts are provided by histidine 79, glutamate 81, aspartate 83, histidine 147, aspartate 166, and histidine 227. Residues 254–393 enclose the Flavodoxin-like domain; it reads ITIFYDTMSN…LCREHGREIA (140 aa). Residues 260–264 and 342–369 each bind FMN; these read TMSNN and AFGSHGWSGGAVDRLSTRLQDAGFEMSL. The 52-residue stretch at 423–474 folds into the Rubredoxin-like domain; the sequence is GPRMQCSVCQWIYDPAKGEPMQDVAPGTPWSEVPDNFLCPECSLGKDVFDEL. Residues cysteine 428, cysteine 431, cysteine 461, and cysteine 464 each coordinate Fe cation.

The protein in the N-terminal section; belongs to the zinc metallo-hydrolase group 3 family. As to quaternary structure, homotetramer. Fe cation is required as a cofactor. The cofactor is FMN.

It is found in the cytoplasm. It participates in nitrogen metabolism; nitric oxide reduction. In terms of biological role, anaerobic nitric oxide reductase; uses NADH to detoxify nitric oxide (NO), protecting several 4Fe-4S NO-sensitive enzymes. Has at least 2 reductase partners, only one of which (NorW, flavorubredoxin reductase) has been identified. NO probably binds to the di-iron center; electrons enter from the NorW at rubredoxin and are transferred sequentially to the FMN center and the di-iron center. Also able to function as an aerobic oxygen reductase. The polypeptide is Anaerobic nitric oxide reductase flavorubredoxin (Shigella sonnei (strain Ss046)).